The chain runs to 193 residues: Ribosomal RNA large subunit methyltransferase E (193 aa).

Residues Gly-51, Trp-53, Asp-69, Asp-85, and Asp-108 each coordinate S-adenosyl-L-methionine. The active-site Proton acceptor is Lys-148.

Belongs to the class I-like SAM-binding methyltransferase superfamily. RNA methyltransferase RlmE family.

It is found in the cytoplasm. The enzyme catalyses uridine(2552) in 23S rRNA + S-adenosyl-L-methionine = 2'-O-methyluridine(2552) in 23S rRNA + S-adenosyl-L-homocysteine + H(+). Functionally, specifically methylates the uridine in position 2552 of 23S rRNA at the 2'-O position of the ribose in the fully assembled 50S ribosomal subunit. This chain is Ribosomal RNA large subunit methyltransferase E, found in Methanoregula boonei (strain DSM 21154 / JCM 14090 / 6A8).